The sequence spans 85 residues: Large ribosomal subunit protein bL27 (85 aa).

It belongs to the bacterial ribosomal protein bL27 family.

The chain is Large ribosomal subunit protein bL27 from Campylobacter fetus subsp. fetus (strain 82-40).